The following is a 235-amino-acid chain: Purine nucleoside phosphorylase DeoD-type (235 aa).

Position 4 (histidine 4) interacts with a purine D-ribonucleoside. Residues glycine 20, arginine 24, arginine 43, and 87-90 contribute to the phosphate site; that span reads RVGT. Residues glutamate 162, 179 to 181, and 203 to 204 contribute to the a purine D-ribonucleoside site; these read EME and SD. The active-site Proton donor is aspartate 204.

The protein belongs to the PNP/UDP phosphorylase family. As to quaternary structure, homohexamer; trimer of homodimers.

The enzyme catalyses a purine D-ribonucleoside + phosphate = a purine nucleobase + alpha-D-ribose 1-phosphate. The catalysed reaction is a purine 2'-deoxy-D-ribonucleoside + phosphate = a purine nucleobase + 2-deoxy-alpha-D-ribose 1-phosphate. Catalyzes the reversible phosphorolytic breakdown of the N-glycosidic bond in the beta-(deoxy)ribonucleoside molecules, with the formation of the corresponding free purine bases and pentose-1-phosphate. This is Purine nucleoside phosphorylase DeoD-type from Bacillus cytotoxicus (strain DSM 22905 / CIP 110041 / 391-98 / NVH 391-98).